The primary structure comprises 104 residues: UPF0235 protein Sfri_2863 (104 aa).

Belongs to the UPF0235 family.

The sequence is that of UPF0235 protein Sfri_2863 from Shewanella frigidimarina (strain NCIMB 400).